A 151-amino-acid polypeptide reads, in one-letter code: SsrA-binding protein (151 aa).

Belongs to the SmpB family.

It is found in the cytoplasm. Its function is as follows. Required for rescue of stalled ribosomes mediated by trans-translation. Binds to transfer-messenger RNA (tmRNA), required for stable association of tmRNA with ribosomes. tmRNA and SmpB together mimic tRNA shape, replacing the anticodon stem-loop with SmpB. tmRNA is encoded by the ssrA gene; the 2 termini fold to resemble tRNA(Ala) and it encodes a 'tag peptide', a short internal open reading frame. During trans-translation Ala-aminoacylated tmRNA acts like a tRNA, entering the A-site of stalled ribosomes, displacing the stalled mRNA. The ribosome then switches to translate the ORF on the tmRNA; the nascent peptide is terminated with the 'tag peptide' encoded by the tmRNA and targeted for degradation. The ribosome is freed to recommence translation, which seems to be the essential function of trans-translation. The chain is SsrA-binding protein from Nitrosomonas europaea (strain ATCC 19718 / CIP 103999 / KCTC 2705 / NBRC 14298).